The chain runs to 457 residues: MQTIDFEKFSQYSKPGPRYTSYPTAVEFKENFNEESLKTAFFNHDNLKNPMPLSLYTHLPFCRSACYFCACSVIYTSLEEKKVRYISYLKKELALLKNAMDTNREVAQFHYGGGTPTFFSPPQLDEITQSIQEVFPNFSQDIEMSCEIDPRHFTKEHMQTLFDRGFNRLSFGVQDFDLEVQKAIHRIQPFEMVQESVKLARDYGIKSINFDLIYGLPNQTKEGFLKTLEWVLKLDPDRLAVFNYAHVPWVKKTMRKIDETLLPSPRDKLEILESLISFLEKANYQMIGMDHFAKSDNELYLALQKAELRRNFQGYTTKKFTQTIGIGVTSIGEGSDYYTQNYKDLHYYEKALDLGHLPVERGVALSQEDVLRKEVIMQMMSNLKLDYSKIEEKFSIDFKAHFKKELEKLKPYEEAGLLSFNSKGFEMTRTGGMLVRNMAMEFDAYLRGGEKHFSKTL.

Residues 47-279 (LKNPMPLSLY…EILESLISFL (233 aa)) form the Radical SAM core domain. S-adenosyl-L-methionine is bound at residue Tyr56. The [4Fe-4S] cluster site is built by Cys62 and Cys66. Phe68 serves as a coordination point for S-adenosyl-L-methionine. Cys69 is a [4Fe-4S] cluster binding site. Residues Gly113, 114-115 (GT), Glu147, Gln174, Arg186, Asp211, Ala245, and Ile331 contribute to the S-adenosyl-L-methionine site.

Belongs to the anaerobic coproporphyrinogen-III oxidase family. As to quaternary structure, monomer. [4Fe-4S] cluster serves as cofactor.

The protein resides in the cytoplasm. It catalyses the reaction coproporphyrinogen III + 2 S-adenosyl-L-methionine = protoporphyrinogen IX + 2 5'-deoxyadenosine + 2 L-methionine + 2 CO2. It functions in the pathway porphyrin-containing compound metabolism; protoporphyrin-IX biosynthesis; protoporphyrinogen-IX from coproporphyrinogen-III (AdoMet route): step 1/1. Its function is as follows. Involved in the heme biosynthesis. Catalyzes the anaerobic oxidative decarboxylation of propionate groups of rings A and B of coproporphyrinogen III to yield the vinyl groups in protoporphyrinogen IX. The chain is Oxygen-independent coproporphyrinogen III oxidase (hemN) from Helicobacter pylori (strain J99 / ATCC 700824) (Campylobacter pylori J99).